The following is a 60-amino-acid chain: Snake venom metalloproteinase bothrojaractivase (60 aa).

Residues 1-60 (RYIELAVVADHGMFTKYRVHELVNTVNGFFRSKQDLIKVQKDKTLTSFGEWRERDLLPRI) form the Peptidase M12B domain. Glu4 contributes to the Ca(2+) binding site.

The protein belongs to the venom metalloproteinase (M12B) family. P-I subfamily. In terms of assembly, monomer. Requires Zn(2+) as cofactor. Expressed by the venom gland.

It localises to the secreted. With respect to regulation, completely inhibited by EDTA and EGTA. Partially inhibited by serine proteinase inhibitors PMSF and benzamidine. Not inhibited by cysteine proteinase inhibitors mercury ions and E-64. Is active without cofactors, although the presence of low concentrations of calcium and zinc ions enhanced its ability to convert prothrombin (F2) into active thrombin. Functionally, prothrombin (F2) activator that is cofactor-independent. Also has fibrinolytic and fibrinogenolytic activity. It degrades the Aalpha-chain and more slowly the Bbeta-chain of fibrin and fibrinogen, while the gamma-chain is only partially and slowly affected. A dose-dependent procoagulant activity is shown in human plasma. The polypeptide is Snake venom metalloproteinase bothrojaractivase (Bothrops jararaca (Jararaca)).